Reading from the N-terminus, the 98-residue chain is UPF0473 protein LAR_0522 (98 aa).

It belongs to the UPF0473 family.

The sequence is that of UPF0473 protein LAR_0522 from Limosilactobacillus reuteri subsp. reuteri (strain JCM 1112) (Lactobacillus reuteri).